The following is a 226-amino-acid chain: Phosphoribosyl-dephospho-CoA transferase (226 aa).

Active-site residues include D148 and D150.

This sequence belongs to the MdcG family.

The enzyme catalyses apo-[malonate decarboxylase ACP] + 2'-(5''-triphospho-alpha-D-ribosyl)-3'-dephospho-CoA = holo-[malonate decarboxylase ACP] + diphosphate. Transfers 2'-(5-triphosphoribosyl)-3'-dephosphocoenzyme-A to the apo-[acyl-carrier-protein] of the malonate decarboxylase to yield holo-[acyl-carrier-protein]. This Bradyrhizobium diazoefficiens (strain JCM 10833 / BCRC 13528 / IAM 13628 / NBRC 14792 / USDA 110) protein is Phosphoribosyl-dephospho-CoA transferase.